Here is a 350-residue protein sequence, read N- to C-terminus: Probable lactoylglutathione lyase, chloroplastic (350 aa).

The transit peptide at methionine 1–leucine 61 directs the protein to the chloroplast. VOC domains are found at residues arginine 88 to arginine 212 and proline 218 to asparagine 342. Histidine 91 is a Zn(2+) binding site. A substrate-binding site is contributed by arginine 95. Position 142 (glutamate 142) interacts with Zn(2+). Substrate is bound by residues asparagine 146 and histidine 160. Histidine 160 and glutamate 208 together coordinate Zn(2+). Catalysis depends on glutamate 208, which acts as the Proton donor/acceptor.

Belongs to the glyoxalase I family. The cofactor is Zn(2+).

The protein resides in the plastid. Its subcellular location is the chloroplast stroma. The enzyme catalyses (R)-S-lactoylglutathione = methylglyoxal + glutathione. It functions in the pathway secondary metabolite metabolism; methylglyoxal degradation; (R)-lactate from methylglyoxal: step 1/2. Catalyzes the conversion of hemimercaptal, formed from methylglyoxal and glutathione, to S-lactoylglutathione. The protein is Probable lactoylglutathione lyase, chloroplastic of Arabidopsis thaliana (Mouse-ear cress).